Consider the following 1328-residue polypeptide: Peroxidasin homolog pxn-2 (1328 aa).

Residues 1-16 form the signal peptide; that stretch reads MLLEFLLLIGISLSTA. Residues 17–45 enclose the LRRNT domain; it reads CPSECRCAGLDVHCEGKNLTAIPGHIPIA. An N-linked (GlcNAc...) asparagine glycan is attached at asparagine 34. LRR repeat units lie at residues 42–66, 67–90, 92–114, 116–137, 138–161, and 164–191; these read IPIA…NFQA, LPNL…LLDS, PGLK…STAP, ALVS…LVSH, SPYM…FFNS, and VPTL…QFAD. Asparagine 77 carries N-linked (GlcNAc...) asparagine glycosylation. An N-linked (GlcNAc...) asparagine glycan is attached at asparagine 220. The interval 305–332 is disordered; that stretch reads KKMQASSSTEPPITTTTMEPMTTSTMDS. Low complexity predominate over residues 310 to 332; the sequence is SSSTEPPITTTTMEPMTTSTMDS. Ig-like C2-type domains lie at 346 to 438 and 445 to 532; these read PEID…FSVS and PVII…ANLL. Cysteine 373 and cysteine 422 are oxidised to a cystine. Residues asparagine 403 and asparagine 455 are each glycosylated (N-linked (GlcNAc...) asparagine). Cysteine 466 and cysteine 516 are joined by a disulfide. Residue asparagine 630 is glycosylated (N-linked (GlcNAc...) asparagine). A disulfide bridge links cysteine 660 with cysteine 676. Aspartate 754 serves as a coordination point for heme b. The Proton acceptor role is filled by histidine 755. Aspartate 756 contributes to the Ca(2+) binding site. 2 disulfides stabilise this stretch: cysteine 775-cysteine 785 and cysteine 779-cysteine 807. The N-linked (GlcNAc...) asparagine glycan is linked to asparagine 776. Positions 839, 841, 843, and 845 each coordinate Ca(2+). N-linked (GlcNAc...) asparagine glycosylation occurs at asparagine 894. Heme b contacts are provided by glutamate 913 and histidine 1008. The LRR 7 repeat unit spans residues 1085–1109; it reads ALDLAALNIQRGRDHGLPSWTEYRK. 2 disulfide bridges follow: cysteine 1111-cysteine 1168 and cysteine 1209-cysteine 1236. Residues asparagine 1112 and asparagine 1128 are each glycosylated (N-linked (GlcNAc...) asparagine). The LRR 8 repeat unit spans residues 1204–1225; that stretch reads LSKIICTNGDDIDRIQRDIFVY. The N-linked (GlcNAc...) asparagine glycan is linked to asparagine 1228. The segment at 1266–1297 is disordered; it reads IGGDEKAKRRKRRHHHSKKSCHDKGKRRKSGD. Over residues 1273–1295 the composition is skewed to basic residues; sequence KRRKRRHHHSKKSCHDKGKRRKS. An N-linked (GlcNAc...) asparagine glycan is attached at asparagine 1300.

The protein belongs to the peroxidase family. XPO subfamily. Requires Ca(2+) as cofactor. The cofactor is heme b. As to expression, expressed in vulval muscles and in some neurons including PVQ. Expressed in the hypodermis and in coelomocytes.

The protein resides in the secreted. It localises to the extracellular space. It is found in the extracellular matrix. Its subcellular location is the basement membrane. It catalyses the reaction L-lysyl-[collagen] + L-methionyl-[collagen] + H2O2 = [collagen]-L-lysyl-N-S-L-methionyl-[collagen] + 2 H2O + H(+). It carries out the reaction bromide + H2O2 = hypobromite + H2O. The catalysed reaction is L-lysyl-[collagen] + L-methionyl-[collagen] + hypobromite = [collagen]-L-lysyl-N-S-L-methionyl-[collagen] + bromide + H2O + H(+). The enzyme catalyses L-tyrosyl-[protein] + bromide + H2O2 + H(+) = 3-bromo-L-tyrosyl-[protein] + 2 H2O. It catalyses the reaction hypobromite + L-tyrosyl-[protein] + H(+) = 3-bromo-L-tyrosyl-[protein] + H2O. Functionally, catalyzes the two-electron oxidation of bromide by hydrogen peroxide and generates hypobromite as a reactive intermediate which mediates the formation of sulfilimine cross-links between methionine and hydroxylysine residues within an uncross-linked collagen IV/COL4A1 NC1 hexamer. Required for embryonic morphogenesis playing a role in epidermal elongation at the twofold stage of embryonic development. Required post-embryonically for basement membrane integrity and muscle-epidermal attachments, and specifically in the function of basement membrane components such as the type IV collagens. May have a role in inhibiting axon regeneration. May functionally antagonize the peroxidasin pxn-1. The protein is Peroxidasin homolog pxn-2 of Caenorhabditis elegans.